The chain runs to 157 residues: uncharacterized protein (157 aa).

A helical membrane pass occupies residues 6-26; the sequence is LVGGVLRVLVVVGAVFDVAVL. Residues 33-157 form the Ricin B-type lectin domain; that stretch reads ADGPVQLKSR…APDQQWDSVP (125 aa).

Its subcellular location is the membrane. This is an uncharacterized protein from Mycobacterium tuberculosis (strain CDC 1551 / Oshkosh).